The sequence spans 280 residues: Phosphonates import ATP-binding protein PhnC 1 (280 aa).

An ABC transporter domain is found at 3-247 (FRLDAASVSY…LLRELYASES (245 aa)). 36–43 (GPSGAGKT) provides a ligand contact to ATP.

The protein belongs to the ABC transporter superfamily. Phosphonates importer (TC 3.A.1.9.1) family. In terms of assembly, the complex is composed of two ATP-binding proteins (PhnC), two transmembrane proteins (PhnE) and a solute-binding protein (PhnD).

It is found in the cell inner membrane. The enzyme catalyses phosphonate(out) + ATP + H2O = phosphonate(in) + ADP + phosphate + H(+). Its function is as follows. Part of the ABC transporter complex PhnCDE involved in phosphonates import. Responsible for energy coupling to the transport system. The protein is Phosphonates import ATP-binding protein PhnC 1 of Cupriavidus necator (strain ATCC 17699 / DSM 428 / KCTC 22496 / NCIMB 10442 / H16 / Stanier 337) (Ralstonia eutropha).